A 381-amino-acid polypeptide reads, in one-letter code: MSSSDEQPRPRRRNQDRQHPNQNRPVLGRTERDRNRRQFGQNFLRDRKTIARIAETAELRPDLPVLEAGPGEGLLTRELADRARQVTSYEIDPRLAKSLREKLSGHPNIEVVNADFLTAEPPPEPFAFVGAIPYGITSAIVDWCLEAPTIETATMVTQLEFARKRTGDYGRWSRLTVMTWPLFEWEFVEKVDRRLFKPVPKVDSAIMRLRRRAEPLLEGAALERYESMVELCFTGVGGNIQASLLRKYPRRRVEAALDHAGVGGGAVVAYVRPEQWLRLFERLDQKNEPRGGQPQRGRRTGGRDHGDRRTGGQDRGDRRTGGRDHRDRQASGHGDRRSSGRNRDDGRTGEREQGDQGGRRGPSGGGRTGGRPGRRGGPGQR.

A compositionally biased stretch (basic and acidic residues) spans 1–19 (MSSSDEQPRPRRRNQDRQH). The tract at residues 1-42 (MSSSDEQPRPRRRNQDRQHPNQNRPVLGRTERDRNRRQFGQN) is disordered. 6 residues coordinate S-adenosyl-L-methionine: asparagine 42, leucine 44, glycine 69, glutamate 90, aspartate 115, and alanine 131. Residues 282–381 (RLDQKNEPRG…PGRRGGPGQR (100 aa)) are disordered. Residues 301–358 (GGRDHGDRRTGGQDRGDRRTGGRDHRDRQASGHGDRRSSGRNRDDGRTGEREQGDQGG) are compositionally biased toward basic and acidic residues. The segment covering 359-381 (RRGPSGGGRTGGRPGRRGGPGQR) has biased composition (gly residues).

It belongs to the class I-like SAM-binding methyltransferase superfamily. rRNA adenine N(6)-methyltransferase family.

The catalysed reaction is adenosine(2085) in 23S rRNA + 2 S-adenosyl-L-methionine = N(6)-dimethyladenosine(2085) in 23S rRNA + 2 S-adenosyl-L-homocysteine + 2 H(+). Functionally, this protein produces a dimethylation of the adenine residue at position 2085 in 23S rRNA, resulting in reduced affinity between ribosomes and macrolide-lincosamide-streptogramin B antibiotics. This chain is rRNA adenine N-6-methyltransferase (ermE), found in Saccharopolyspora erythraea (strain ATCC 11635 / DSM 40517 / JCM 4748 / NBRC 13426 / NCIMB 8594 / NRRL 2338).